The chain runs to 404 residues: Short chain dehydrogenase sirR (404 aa).

Positions 1 to 28 (MHSKPQRALVIGATGVSGWSLCLQLLQT) are cleaved as a signal peptide. Residues Ser-56 and Leu-58 each coordinate NADP(+). N-linked (GlcNAc...) asparagine glycosylation is found at Asn-67 and Asn-157. The active-site Proton donor is Ser-237. A glycan (N-linked (GlcNAc...) asparagine) is linked at Asn-274. NADP(+) is bound at residue Val-291.

Belongs to the short-chain dehydrogenases/reductases (SDR) family. Highly divergent.

It participates in mycotoxin biosynthesis. Its function is as follows. Short chain dehydrogenase; part of the gene cluster that mediates the biosynthesis of sirodesmin PL, an epipolythiodioxopiperazine (ETP) characterized by a disulfide bridged cyclic dipeptide and that acts as a phytotoxin which is involved in the blackleg didease of canola. SirD catalyzes the O-prenylation of L-tyrosine (L-Tyr) in the presence of dimethylallyl diphosphate (DMAPP) to yield 4-O-dimethylallyl-L-Tyr, and therefore represents probably the first pathway-specific enzyme in the biosynthesis of sirodesmin PL. 4-O-dimethylallyl-L-Tyr, then undergoes condensation with L-Ser in a reaction catalyzed by the non-ribosomal peptide synthase sirP to form the diketopiperazine (DKP) backbone. Further bishydroxylation of the DKP performed by the cytochrome P450 monooxygenase sirC leads to the production of the intermediate phomamide. This step is essential to form the reactive thiol group required for toxicity of sirodesmin PL. The next steps of sirodesmin biosynthesis are not well understood yet, but some predictions could be made from intermediate compounds identification. Phomamide is converted into phomalizarine via oxidation, probably by sirT. Further oxidation, methylation (by sirM or sirN) and reduction steps convert phomalizarine to deacetyl sirodesmin. Finally, acetyltransferase sirH probably acetylates deacetyl sirodesmin to produce sirodesmin PL. This is Short chain dehydrogenase sirR from Leptosphaeria maculans (Blackleg fungus).